A 71-amino-acid chain; its full sequence is BBSome-interacting protein 1 (71 aa).

The protein belongs to the BBIP10 family.

Its subcellular location is the cell projection. It is found in the cilium. It localises to the cytoplasm. In terms of biological role, required for primary cilia assembly. The chain is BBSome-interacting protein 1 (bbip1) from Nematostella vectensis (Starlet sea anemone).